Here is a 168-residue protein sequence, read N- to C-terminus: MQAIFQALNFNPWTFLFQTLNLLVVMGLLYVFLYKPLGKVLADREARIEGNLNDAAAAREKAENILAEYRQQLQGARQEAQAILDRATKMAEETRAEIINRAREEAERTLAQARREIEGEKSKALAAIRSEAASLAILAAGKVLERSLTPDDQERLAREAIAEVERLQ.

The helical transmembrane segment at 13–33 (WTFLFQTLNLLVVMGLLYVFL) threads the bilayer.

Belongs to the ATPase B chain family. As to quaternary structure, F-type ATPases have 2 components, F(1) - the catalytic core - and F(0) - the membrane proton channel. F(1) has five subunits: alpha(3), beta(3), gamma(1), delta(1), epsilon(1). F(0) has three main subunits: a(1), b(2) and c(10-14). The alpha and beta chains form an alternating ring which encloses part of the gamma chain. F(1) is attached to F(0) by a central stalk formed by the gamma and epsilon chains, while a peripheral stalk is formed by the delta and b chains.

It localises to the cell membrane. Its function is as follows. F(1)F(0) ATP synthase produces ATP from ADP in the presence of a proton or sodium gradient. F-type ATPases consist of two structural domains, F(1) containing the extramembraneous catalytic core and F(0) containing the membrane proton channel, linked together by a central stalk and a peripheral stalk. During catalysis, ATP synthesis in the catalytic domain of F(1) is coupled via a rotary mechanism of the central stalk subunits to proton translocation. Functionally, component of the F(0) channel, it forms part of the peripheral stalk, linking F(1) to F(0). In Moorella thermoacetica (strain ATCC 39073 / JCM 9320), this protein is ATP synthase subunit b.